Reading from the N-terminus, the 80-residue chain is Clavaspirin (80 aa).

Positions 1–17 (MKTIILILLILGLGIDA) are cleaved as a signal peptide. Residues 18-29 (KSLEESKADEEK) constitute a propeptide that is removed on maturation. L52 carries the post-translational modification Leucine amide. The propeptide occupies 53 to 80 (GDDQQDNGKFYGYYAEDNGKHWYDTGDQ).

Pharyngeal tissues and hemocytes.

Its subcellular location is the secreted. In terms of biological role, exhibits broad-spectrum antimicrobial activity against both Gram-positive and Gram-negative bacteria. Has potent hemolytic activity. The sequence is that of Clavaspirin from Styela clava (Sea squirt).